Reading from the N-terminus, the 219-residue chain is MLVLFGQPENWHEQDFRAVDDRVRGGSSISHLTEEKDSDGKSRAKFWGTLDTKTLGGAGFCSQATNIKDRTWNLKEFKGIELDIAKSDSYKYTFIIKDCHQDWETSDEKSSLSYEYDFTPIYSKEDQVVSIPFSEFKPTYRGRPVEGAPELDVSKITQFSIMIRSFFNSQSGDYELVLNSIRAIPKNVPFTTHKMSNEKQRLFDDYEKEIAGGSWCICQ.

Belongs to the CIA30 family.

The protein localises to the cytoplasm. It is found in the nucleus. This is an uncharacterized protein from Schizosaccharomyces pombe (strain 972 / ATCC 24843) (Fission yeast).